The chain runs to 196 residues: Nucleoside triphosphate pyrophosphatase (196 aa).

Residue Asp-73 is the Proton acceptor of the active site.

This sequence belongs to the Maf family. A divalent metal cation is required as a cofactor.

It localises to the cytoplasm. It catalyses the reaction a ribonucleoside 5'-triphosphate + H2O = a ribonucleoside 5'-phosphate + diphosphate + H(+). The catalysed reaction is a 2'-deoxyribonucleoside 5'-triphosphate + H2O = a 2'-deoxyribonucleoside 5'-phosphate + diphosphate + H(+). In terms of biological role, nucleoside triphosphate pyrophosphatase. May have a dual role in cell division arrest and in preventing the incorporation of modified nucleotides into cellular nucleic acids. This Maricaulis maris (strain MCS10) (Caulobacter maris) protein is Nucleoside triphosphate pyrophosphatase.